Consider the following 297-residue polypeptide: Ribonuclease HIII (297 aa).

In terms of domain architecture, RNase H type-2 spans 81 to 297 (IPIIGTDEVG…NTKKAQALLK (217 aa)). Residues aspartate 87, glutamate 88, and aspartate 192 each coordinate a divalent metal cation.

This sequence belongs to the RNase HII family. RnhC subfamily. Mn(2+) serves as cofactor. Mg(2+) is required as a cofactor.

Its subcellular location is the cytoplasm. It catalyses the reaction Endonucleolytic cleavage to 5'-phosphomonoester.. Its function is as follows. Endonuclease that specifically degrades the RNA of RNA-DNA hybrids. The protein is Ribonuclease HIII of Streptococcus agalactiae serotype Ia (strain ATCC 27591 / A909 / CDC SS700).